Consider the following 275-residue polypeptide: MKRNILALVVVVALISQSRPAESAGGTIIATLSKIPLSTLASALNTALETGASVASAAAAATSSDYSVTCVIEVENWTKHLMKYPVVQIANSGGLLTVAKNVLPAEIQSFAMRKAWGANGVYGTVSWVLGQTNRRVVIMWSAPYNFDFYSNWLAVGMSRPGLAVPSSRSTWFDLMYYGNSNADISFVRGEYYHSVDPIYFKNSEWEIEGSMNNIHKARVRATVKPIKTMDLASSILTKLEALAGANGKRAIQQELARRAEEEKQRKRKALDEMLK.

The N-terminal stretch at 1–23 is a signal peptide; sequence MKRNILALVVVVALISQSRPAES. The tract at residues 23 to 32 is plays an important role in the hemolytic activity; it reads SAGGTIIATL. The segment at 49–67 is N-terminal region; it reads ETGASVASAAAAATSSDYS. 5 residues coordinate phosphocholine: G123, S141, P143, Y176, and Y177. The segment at 141–156 is trp-rich region, which is important for the binding to lipid membrane; the sequence is SAPYNFDFYSNWLAVG. The propeptide occupies 249–275; that stretch reads RAIQQELARRAEEEKQRKRKALDEMLK.

This sequence belongs to the actinoporin family. Sea anemone subfamily. As to quaternary structure, octamer or nonamer in membranes. Monomer in the soluble state. As to expression, salivary gland.

Its subcellular location is the secreted. It is found in the nematocyst. The protein resides in the target cell membrane. Functionally, pore-forming protein that forms cations-selective hydrophilic pores of around 1 nm and causes cardiac stimulation and cytolysis. Pore formation is a multi-step process that involves specific recognition of membrane sphingomyelin (but neither cholesterol nor phosphatidylcholine) using aromatic rich region and adjacent phosphocholine (POC) binding site, firm binding to the membrane (mainly driven by hydrophobic interactions) accompanied by the transfer of the N-terminal region to the lipid-water interface and finally pore formation after oligomerization of monomers. Exhibits both hemolytic and lethal activities. Gangliosides potently inhibits the hemolytic activity. The sequence is that of Echotoxin-2 from Monoplex parthenopeus (Giant triton).